A 124-amino-acid chain; its full sequence is Photoactive yellow protein (124 aa).

In terms of domain architecture, PAS spans 22 to 85; that stretch reads AESLPFGAVL…GEFLKFNRTG (64 aa). At Cys-68 the chain carries S-(4-hydroxycinnamyl)cysteine.

It belongs to the photoactive yellow protein family. In terms of processing, the 4-hydroxycinnamic acid (p-coumaric acid) chromophore is covalently bound via a thioester linkage.

Its function is as follows. This photoactive protein is a photoreceptor with kinetics similar to that of rhodopsin. This Rhodobacter capsulatus (strain ATCC BAA-309 / NBRC 16581 / SB1003) protein is Photoactive yellow protein (pyp).